We begin with the raw amino-acid sequence, 241 residues long: Orotidine 5'-phosphate decarboxylase (241 aa).

Substrate is bound by residues D18, K39, 66–75 (DLKFHDIPAT), T130, R192, Q201, G221, and R222. Residue K68 is the Proton donor of the active site.

It belongs to the OMP decarboxylase family. Type 1 subfamily. In terms of assembly, homodimer.

The enzyme catalyses orotidine 5'-phosphate + H(+) = UMP + CO2. The protein operates within pyrimidine metabolism; UMP biosynthesis via de novo pathway; UMP from orotate: step 2/2. Its function is as follows. Catalyzes the decarboxylation of orotidine 5'-monophosphate (OMP) to uridine 5'-monophosphate (UMP). This chain is Orotidine 5'-phosphate decarboxylase, found in Synechococcus sp. (strain CC9605).